Consider the following 292-residue polypeptide: L-serine dehydratase, alpha chain (292 aa).

The protein belongs to the iron-sulfur dependent L-serine dehydratase family. Heterooctamer of four alpha chains and four beta chains. It depends on [4Fe-4S] cluster as a cofactor.

It carries out the reaction L-serine = pyruvate + NH4(+). It functions in the pathway carbohydrate biosynthesis; gluconeogenesis. In Peptoniphilus asaccharolyticus (Peptostreptococcus asaccharolyticus), this protein is L-serine dehydratase, alpha chain (sdhA).